Consider the following 358-residue polypeptide: DNA ligase C (358 aa).

Lysine 29 (N6-AMP-lysine intermediate) is an active-site residue.

It belongs to the ATP-dependent DNA ligase family. The cofactor is a divalent metal cation.

The catalysed reaction is ATP + (deoxyribonucleotide)n-3'-hydroxyl + 5'-phospho-(deoxyribonucleotide)m = (deoxyribonucleotide)n+m + AMP + diphosphate.. Its function is as follows. DNA ligase that seals nicks in double-stranded DNA during DNA replication, DNA recombination and DNA repair. This Mycobacterium tuberculosis (strain ATCC 25618 / H37Rv) protein is DNA ligase C (ligC).